The following is a 106-amino-acid chain: N(4)-acetylcytidine amidohydrolase (106 aa).

The 97-residue stretch at 9-105 folds into the ASCH domain; sequence TFFEFLTPLI…ELYVIEYELI (97 aa). Lys23 (proton acceptor) is an active-site residue. Thr26 (nucleophile) is an active-site residue. The active-site Proton donor is Glu76.

This sequence belongs to the N(4)-acetylcytidine amidohydrolase family.

The catalysed reaction is N(4)-acetylcytidine + H2O = cytidine + acetate + H(+). It catalyses the reaction N(4)-acetyl-2'-deoxycytidine + H2O = 2'-deoxycytidine + acetate + H(+). The enzyme catalyses N(4)-acetylcytosine + H2O = cytosine + acetate + H(+). Catalyzes the hydrolysis of N(4)-acetylcytidine (ac4C). The polypeptide is N(4)-acetylcytidine amidohydrolase (Vibrio campbellii (strain ATCC BAA-1116)).